The following is a 660-amino-acid chain: Acetyl-coenzyme A synthetase (660 aa).

CoA contacts are provided by residues 197–200 (RGGK) and Thr317. ATP contacts are provided by residues 397–399 (GEP), 421–426 (DTWWQT), Asp512, and Arg528. CoA is bound at residue Ser536. Arg539 contributes to the ATP binding site. Residues Val550, His552, and Val555 each coordinate Mg(2+). Lys625 is modified (N6-acetyllysine).

It belongs to the ATP-dependent AMP-binding enzyme family. Mg(2+) serves as cofactor. Acetylated. Deacetylation by the SIR2-homolog deacetylase activates the enzyme.

It catalyses the reaction acetate + ATP + CoA = acetyl-CoA + AMP + diphosphate. In terms of biological role, catalyzes the conversion of acetate into acetyl-CoA (AcCoA), an essential intermediate at the junction of anabolic and catabolic pathways. AcsA undergoes a two-step reaction. In the first half reaction, AcsA combines acetate with ATP to form acetyl-adenylate (AcAMP) intermediate. In the second half reaction, it can then transfer the acetyl group from AcAMP to the sulfhydryl group of CoA, forming the product AcCoA. The polypeptide is Acetyl-coenzyme A synthetase (Burkholderia mallei (strain NCTC 10247)).